Consider the following 61-residue polypeptide: Small ribosomal subunit protein uS14 (61 aa).

Residues cysteine 24, cysteine 27, cysteine 40, and cysteine 43 each coordinate Zn(2+).

It belongs to the universal ribosomal protein uS14 family. Zinc-binding uS14 subfamily. In terms of assembly, part of the 30S ribosomal subunit. Contacts proteins S3 and S10. Zn(2+) is required as a cofactor.

Its function is as follows. Binds 16S rRNA, required for the assembly of 30S particles and may also be responsible for determining the conformation of the 16S rRNA at the A site. This is Small ribosomal subunit protein uS14 from Syntrophus aciditrophicus (strain SB).